The primary structure comprises 102 residues: MADFLKGLPVYNKSNFSRFHADSVCKASNRRPSVYLPTREYPSEQIIVTEKTNILLRYLHQQWDKKNAAKKRDQEQVELEGESSAPPRKVARTDSPDMHEDT.

Position 2 is an N-acetylalanine (Ala2). Ser33 carries the post-translational modification Phosphoserine. Composition is skewed to basic and acidic residues over residues 66–75 (KNAAKKRDQE) and 91–102 (ARTDSPDMHEDT). The segment at 66–102 (KNAAKKRDQEQVELEGESSAPPRKVARTDSPDMHEDT) is disordered. At Ser95 the chain carries Phosphoserine.

It belongs to the DDA1 family. Component of numerous DCX (DDB1-CUL4-X-box) E3 ubiquitin-protein ligase complexes which consist of a core of DDB1, cullin-4 (CUL4A or CUL4B), DDA1 and RBX1. Component of the DCX(DCAF15) complex, also named CLR4(DCAF15) complex, composed of DCAF15, DDB1, cullin-4 (CUL4A or CUL4B), DDA1 and RBX1. Part of the DDD core complex containing DET1, DDA1 and DDB1; the DDD core complex recruits a specific UBE2E enzyme, such as UBE2E1, UBE2E2 UBE2E3, to form specific DDD-E2 complexes.

It participates in protein modification; protein ubiquitination. Functionally, functions as a component of numerous distinct DCX (DDB1-CUL4-X-box) E3 ubiquitin-protein ligase complexes which mediate the ubiquitination and subsequent proteasomal degradation of target proteins. In the DCX complexes, acts as a scaffolding subunit required to stabilize the complex. The protein is DET1- and DDB1-associated protein 1 of Bos taurus (Bovine).